Here is a 315-residue protein sequence, read N- to C-terminus: Ferrochelatase (315 aa).

2 residues coordinate Fe cation: histidine 193 and glutamate 273.

This sequence belongs to the ferrochelatase family.

The protein localises to the cytoplasm. It carries out the reaction heme b + 2 H(+) = protoporphyrin IX + Fe(2+). Its pathway is porphyrin-containing compound metabolism; protoheme biosynthesis; protoheme from protoporphyrin-IX: step 1/1. Functionally, catalyzes the ferrous insertion into protoporphyrin IX. The sequence is that of Ferrochelatase from Wolbachia sp. subsp. Drosophila simulans (strain wRi).